We begin with the raw amino-acid sequence, 473 residues long: Ribulose bisphosphate carboxylase large chain (473 aa).

Residues 1-2 (MS) constitute a propeptide that is removed on maturation. Pro-3 is modified (N-acetylproline). N6,N6,N6-trimethyllysine is present on Lys-14. Asn-123 and Thr-173 together coordinate substrate. Lys-175 serves as the catalytic Proton acceptor. Lys-177 provides a ligand contact to substrate. Lys-201, Asp-203, and Glu-204 together coordinate Mg(2+). N6-carboxylysine is present on Lys-201. His-294 functions as the Proton acceptor in the catalytic mechanism. Substrate contacts are provided by Arg-295, His-327, and Ser-379.

It belongs to the RuBisCO large chain family. Type I subfamily. Heterohexadecamer of 8 large chains and 8 small chains; disulfide-linked. The disulfide link is formed within the large subunit homodimers. Mg(2+) serves as cofactor. In terms of processing, the disulfide bond which can form in the large chain dimeric partners within the hexadecamer appears to be associated with oxidative stress and protein turnover.

Its subcellular location is the plastid. It localises to the chloroplast. It catalyses the reaction 2 (2R)-3-phosphoglycerate + 2 H(+) = D-ribulose 1,5-bisphosphate + CO2 + H2O. The catalysed reaction is D-ribulose 1,5-bisphosphate + O2 = 2-phosphoglycolate + (2R)-3-phosphoglycerate + 2 H(+). RuBisCO catalyzes two reactions: the carboxylation of D-ribulose 1,5-bisphosphate, the primary event in carbon dioxide fixation, as well as the oxidative fragmentation of the pentose substrate in the photorespiration process. Both reactions occur simultaneously and in competition at the same active site. The protein is Ribulose bisphosphate carboxylase large chain of Vigna unguiculata (Cowpea).